Consider the following 86-residue polypeptide: Large ribosomal subunit protein eL43 (86 aa).

The C4-type zinc finger occupies 38-60 (CPFCGHKGKVYRLSTGVWACKKC).

The protein belongs to the eukaryotic ribosomal protein eL43 family. Zn(2+) serves as cofactor.

The protein is Large ribosomal subunit protein eL43 of Desulfurococcus amylolyticus (strain DSM 18924 / JCM 16383 / VKM B-2413 / 1221n) (Desulfurococcus kamchatkensis).